A 155-amino-acid polypeptide reads, in one-letter code: Ribosomal RNA large subunit methyltransferase H (155 aa).

Residues Leu72, Gly103, and 122–127 (LSPLTL) each bind S-adenosyl-L-methionine.

Belongs to the RNA methyltransferase RlmH family. In terms of assembly, homodimer.

The protein localises to the cytoplasm. The catalysed reaction is pseudouridine(1915) in 23S rRNA + S-adenosyl-L-methionine = N(3)-methylpseudouridine(1915) in 23S rRNA + S-adenosyl-L-homocysteine + H(+). Its function is as follows. Specifically methylates the pseudouridine at position 1915 (m3Psi1915) in 23S rRNA. The polypeptide is Ribosomal RNA large subunit methyltransferase H (Histophilus somni (strain 129Pt) (Haemophilus somnus)).